The primary structure comprises 338 residues: 1-aminocyclopropane-1-carboxylate deaminase (338 aa).

The residue at position 51 (Lys51) is an N6-(pyridoxal phosphate)lysine. Ser78 (nucleophile) is an active-site residue.

The protein belongs to the ACC deaminase/D-cysteine desulfhydrase family. As to quaternary structure, homotrimer. Pyridoxal 5'-phosphate serves as cofactor.

It catalyses the reaction 1-aminocyclopropane-1-carboxylate + H2O = 2-oxobutanoate + NH4(+). Its function is as follows. Catalyzes a cyclopropane ring-opening reaction, the irreversible conversion of 1-aminocyclopropane-1-carboxylate (ACC) to ammonia and alpha-ketobutyrate. Allows growth on ACC as a nitrogen source. The protein is 1-aminocyclopropane-1-carboxylate deaminase of Burkholderia multivorans (strain ATCC 17616 / 249).